The following is a 44-amino-acid chain: U17-ctenitoxin-Co1a (44 aa).

4 disulfides stabilise this stretch: cysteine 3–cysteine 20, cysteine 10–cysteine 26, cysteine 19–cysteine 40, and cysteine 28–cysteine 38.

Expressed by the venom gland.

It localises to the secreted. Omega-agatoxins are antagonists of voltage-sensitive calcium channels (Cav). Toxic to mice by intracerebroventricular injection. This chain is U17-ctenitoxin-Co1a, found in Ctenus ornatus (Brazilian spider).